The following is a 338-amino-acid chain: Phenylalanine--tRNA ligase alpha subunit (338 aa).

Glu252 is a Mg(2+) binding site.

The protein belongs to the class-II aminoacyl-tRNA synthetase family. Phe-tRNA synthetase alpha subunit type 1 subfamily. In terms of assembly, tetramer of two alpha and two beta subunits. The cofactor is Mg(2+).

Its subcellular location is the cytoplasm. The catalysed reaction is tRNA(Phe) + L-phenylalanine + ATP = L-phenylalanyl-tRNA(Phe) + AMP + diphosphate + H(+). This is Phenylalanine--tRNA ligase alpha subunit (pheS) from Aquifex aeolicus (strain VF5).